Reading from the N-terminus, the 338-residue chain is MQIYYDKDADLSIIQGKKVAIIGYGSQGHAHANNLKDSGVQVVVGLRPGSASAKKAENAGLAVASVEDAVKQADVIMILAPDEHQARLYNEQIAPNIKQGAALAFAHGFNIHFEQITPRADLDVIMIAPKGPGHLVRSTYTQGGGVPSLIAVYQNASGRAKELALSYASANGGGRAGIIETTFREETETDLFGEQAVLCGGATALVQAGFETLVEAGYAPEMAYFECLHELKLIVDLMYEGGIANMRYSISNTAEYGDLTRGPRIVTEQTKQEMKKILREIQTGEFAREFILENQAGAATLKAKRRLGREHLIESVGARLRDMMPWIKANRIVDTSKN.

In terms of domain architecture, KARI N-terminal Rossmann spans 1 to 181 (MQIYYDKDAD…GGGRAGIIET (181 aa)). NADP(+)-binding positions include 24–27 (YGSQ), arginine 47, serine 50, serine 52, and 82–85 (DEHQ). The active site involves histidine 107. Glycine 133 contacts NADP(+). A KARI C-terminal knotted domain is found at 182-327 (TFREETETDL…ARLRDMMPWI (146 aa)). Positions 190, 194, 226, and 230 each coordinate Mg(2+). Serine 251 contacts substrate.

The protein belongs to the ketol-acid reductoisomerase family. Mg(2+) serves as cofactor.

It carries out the reaction (2R)-2,3-dihydroxy-3-methylbutanoate + NADP(+) = (2S)-2-acetolactate + NADPH + H(+). It catalyses the reaction (2R,3R)-2,3-dihydroxy-3-methylpentanoate + NADP(+) = (S)-2-ethyl-2-hydroxy-3-oxobutanoate + NADPH + H(+). Its pathway is amino-acid biosynthesis; L-isoleucine biosynthesis; L-isoleucine from 2-oxobutanoate: step 2/4. It participates in amino-acid biosynthesis; L-valine biosynthesis; L-valine from pyruvate: step 2/4. In terms of biological role, involved in the biosynthesis of branched-chain amino acids (BCAA). Catalyzes an alkyl-migration followed by a ketol-acid reduction of (S)-2-acetolactate (S2AL) to yield (R)-2,3-dihydroxy-isovalerate. In the isomerase reaction, S2AL is rearranged via a Mg-dependent methyl migration to produce 3-hydroxy-3-methyl-2-ketobutyrate (HMKB). In the reductase reaction, this 2-ketoacid undergoes a metal-dependent reduction by NADPH to yield (R)-2,3-dihydroxy-isovalerate. In Methylococcus capsulatus (strain ATCC 33009 / NCIMB 11132 / Bath), this protein is Ketol-acid reductoisomerase (NADP(+)).